Consider the following 103-residue polypeptide: Acylphosphatase-2 (103 aa).

In terms of domain architecture, Acylphosphatase-like spans 13–103 (SVDYEVFGRV…LQYNGFSTRY (91 aa)). Catalysis depends on residues Arg28 and Asn46.

This sequence belongs to the acylphosphatase family.

The enzyme catalyses an acyl phosphate + H2O = a carboxylate + phosphate + H(+). The sequence is that of Acylphosphatase-2 (acyp2) from Xenopus tropicalis (Western clawed frog).